Consider the following 912-residue polypeptide: Multiple C2 and transmembrane domain-containing protein (912 aa).

A compositionally biased stretch (low complexity) spans 1-33 (MSRIQYVDQVDQVELDQQQQPGSSSTVSGSTPP). Disordered regions lie at residues 1–80 (MSRI…KRAK) and 145–165 (SSEG…IGGS). Residues 38-49 (PHGSPSLQQSQR) show a composition bias toward polar residues. C2 domains lie at 218-337 (QANE…HLQL), 371-493 (RNSK…HLML), and 522-637 (ERYK…TLKD). Ca(2+) is bound by residues Asp-252, Asp-258, Asp-305, Asp-307, and Asp-313. Positions 553, 559, 605, and 607 each coordinate Ca(2+). The next 2 helical transmembrane spans lie at 729-749 (IVAC…LIIL) and 826-846 (LTWL…FVPL). Residues 887-912 (NQYRELPPSAPTDQTRNNPKKKLKGS) are disordered.

Ca(2+) serves as cofactor. Motor neurons (at protein level).

Its subcellular location is the endoplasmic reticulum membrane. In terms of biological role, calcium sensor which is essential for the stabilization of normal baseline neurotransmitter release and for the induction and long-term maintenance of presynaptic homeostatic plasticity. The sequence is that of Multiple C2 and transmembrane domain-containing protein from Drosophila melanogaster (Fruit fly).